A 598-amino-acid polypeptide reads, in one-letter code: Autophagy-related protein 22-1 (598 aa).

The tract at residues 1-20 (MEDGGAGLRAPRYPAEDTSP) is disordered. Residues 28–48 (GFFCYGLAAEVFAVCAVGSFL) traverse the membrane as a helical segment. Residues asparagine 74 and asparagine 80 are each glycosylated (N-linked (GlcNAc...) asparagine). Helical transmembrane passes span 111–131 (SFAM…LVSV), 159–179 (FLLV…ICVV), and 182–202 (GCSF…HPVV). Residues 207–238 (DHPTASSSIPLQPISPQRSSRKSEESLHQVNR) are disordered. A compositionally biased stretch (low complexity) spans 212–224 (SSSIPLQPISPQR). Over residues 227-238 (RKSEESLHQVNR) the composition is skewed to basic and acidic residues. The chain crosses the membrane as a helical span at residues 263–283 (VGIGYMAAVSVQVICILILYI). An N-linked (GlcNAc...) asparagine glycan is attached at asparagine 285. A run of 7 helical transmembrane segments spans residues 297-317 (TVLF…VMWL), 363-383 (VLLF…ISAT), 400-420 (ALLS…WPII), 431-451 (IIVC…LGFL), 465-485 (WYEI…LSSY), 489-509 (FYGL…FAIT), and 534-554 (AFGF…MVDV). Residues 575 to 598 (HEDFESFEGSSDGHEAEGLMRDHD) form a disordered region. The segment covering 585–598 (SDGHEAEGLMRDHD) has biased composition (basic and acidic residues).

Belongs to the ATG22 family.

It is found in the vacuole membrane. Functionally, vacuolar effluxer which mediate the efflux of amino acids resulting from autophagic degradation. The release of autophagic amino acids allows the maintenance of protein synthesis and viability during nitrogen starvation. The chain is Autophagy-related protein 22-1 (atg22-1) from Sclerotinia sclerotiorum (strain ATCC 18683 / 1980 / Ss-1) (White mold).